A 201-amino-acid polypeptide reads, in one-letter code: Recombination protein RecR (201 aa).

The C4-type zinc-finger motif lies at 60 to 75; it reads CSCCGNVDTSDPCTIC. Residues 83 to 178 enclose the Toprim domain; sequence TTLIVVEDVS…RVTRLAHGVP (96 aa).

This sequence belongs to the RecR family.

Functionally, may play a role in DNA repair. It seems to be involved in an RecBC-independent recombinational process of DNA repair. It may act with RecF and RecO. The polypeptide is Recombination protein RecR (Brucella anthropi (strain ATCC 49188 / DSM 6882 / CCUG 24695 / JCM 21032 / LMG 3331 / NBRC 15819 / NCTC 12168 / Alc 37) (Ochrobactrum anthropi)).